We begin with the raw amino-acid sequence, 332 residues long: 2,3-diketo-L-gulonate reductase (332 aa).

Residue histidine 44 is the Proton donor of the active site. Residues 168-174 (ITMVDMS), 224-225 (WK), and 304-306 (GHE) contribute to the NAD(+) site.

Belongs to the LDH2/MDH2 oxidoreductase family. DlgD subfamily. As to quaternary structure, homodimer.

It localises to the cytoplasm. The enzyme catalyses 3-dehydro-L-gulonate + NAD(+) = 2,3-dioxo-L-gulonate + NADH + H(+). The catalysed reaction is 3-dehydro-L-gulonate + NADP(+) = 2,3-dioxo-L-gulonate + NADPH + H(+). In terms of biological role, catalyzes the reduction of 2,3-diketo-L-gulonate in the presence of NADH, to form 3-keto-L-gulonate. The polypeptide is 2,3-diketo-L-gulonate reductase (Escherichia coli O127:H6 (strain E2348/69 / EPEC)).